The chain runs to 90 residues: Small ribosomal subunit protein bS16 (90 aa).

It belongs to the bacterial ribosomal protein bS16 family.

In Bacillus pumilus (strain SAFR-032), this protein is Small ribosomal subunit protein bS16.